The chain runs to 186 residues: NADH-dependent FMN reductase SfnF (186 aa).

The protein belongs to the SsuE family.

It catalyses the reaction FMNH2 + NAD(+) = FMN + NADH + 2 H(+). Involved in the dimethyl sulfide degradation pathway. Catalyzes the NADH-dependent reduction of FMN. This chain is NADH-dependent FMN reductase SfnF, found in Pseudomonas putida (Arthrobacter siderocapsulatus).